The sequence spans 333 residues: DNA-directed RNA polymerase subunit alpha (333 aa).

Residues 1–234 (MQISVNEFLT…QQLAAFVDLK (234 aa)) form an alpha N-terminal domain (alpha-NTD) region. The tract at residues 248 to 333 (IDPILLRPVD…SLKKDDKATA (86 aa)) is alpha C-terminal domain (alpha-CTD).

It belongs to the RNA polymerase alpha chain family. As to quaternary structure, homodimer. The RNAP catalytic core consists of 2 alpha, 1 beta, 1 beta' and 1 omega subunit. When a sigma factor is associated with the core the holoenzyme is formed, which can initiate transcription.

The enzyme catalyses RNA(n) + a ribonucleoside 5'-triphosphate = RNA(n+1) + diphosphate. DNA-dependent RNA polymerase catalyzes the transcription of DNA into RNA using the four ribonucleoside triphosphates as substrates. The chain is DNA-directed RNA polymerase subunit alpha from Pseudomonas fluorescens (strain Pf0-1).